The sequence spans 407 residues: tRNA pseudouridine synthase Pus10 (407 aa).

Residue Asp232 is the Nucleophile of the active site. Positions 300 and 369 each coordinate substrate.

It belongs to the pseudouridine synthase Pus10 family.

The catalysed reaction is uridine(54) in tRNA = pseudouridine(54) in tRNA. It carries out the reaction uridine(55) in tRNA = pseudouridine(55) in tRNA. Responsible for synthesis of pseudouridine from uracil-54 and uracil-55 in the psi GC loop of transfer RNAs. The protein is tRNA pseudouridine synthase Pus10 of Methanosphaera stadtmanae (strain ATCC 43021 / DSM 3091 / JCM 11832 / MCB-3).